Consider the following 174-residue polypeptide: RNA pyrophosphohydrolase (174 aa).

The 144-residue stretch at 6–149 folds into the Nudix hydrolase domain; sequence GFRANVGIII…KRDVYRKVMK (144 aa). Positions 38-59 match the Nudix box motif; it reads GGVDDGESAEEAMYRELYEEVG.

This sequence belongs to the Nudix hydrolase family. RppH subfamily. Requires a divalent metal cation as cofactor.

Its function is as follows. Accelerates the degradation of transcripts by removing pyrophosphate from the 5'-end of triphosphorylated RNA, leading to a more labile monophosphorylated state that can stimulate subsequent ribonuclease cleavage. The polypeptide is RNA pyrophosphohydrolase (Shewanella sp. (strain W3-18-1)).